Consider the following 248-residue polypeptide: E3 ubiquitin-protein ligase BIG BROTHER (248 aa).

The RING-type; atypical zinc-finger motif lies at 197–238 (CVICQLKYKIGERQMNLPCKHVYHSECISKWLSINKVCPVCN).

Interacts with the E2 ubiquitin conjugating enzyme UBC10 via the RING domain. Interacts with DA1. Auto-ubiquitinated. Mostly expressed in inflorescence, and, to a lower extent, in seedlings, roots, stems, leaves and siliques.

It carries out the reaction S-ubiquitinyl-[E2 ubiquitin-conjugating enzyme]-L-cysteine + [acceptor protein]-L-lysine = [E2 ubiquitin-conjugating enzyme]-L-cysteine + N(6)-ubiquitinyl-[acceptor protein]-L-lysine.. The protein operates within protein modification; protein ubiquitination. E3 ubiquitin-protein ligase that limits organ size, and possibly seed size, in a dose-dependent manner. Negatively regulates the duration of cell proliferation in leaves and petals independently of the major phytohormones (e.g. auxin, cytokinin, gibberellin, brassinosteroids, ethylene, abscisic acid, jasmonic acid), probably by targeting growth stimulators for degradation. Limits the proliferation of root meristematic cells. Polyubiquitinates DA1. Involved in the promotion of leaf senescence, in addition to its function in restricting plant growth. Possesses E3 ubiquitin-protein ligase activity in vitro. This is E3 ubiquitin-protein ligase BIG BROTHER (BB) from Arabidopsis thaliana (Mouse-ear cress).